Consider the following 150-residue polypeptide: 3-hydroxyacyl-[acyl-carrier-protein] dehydratase FabZ (150 aa).

The active site involves His-56.

This sequence belongs to the thioester dehydratase family. FabZ subfamily.

The protein localises to the cytoplasm. It carries out the reaction a (3R)-hydroxyacyl-[ACP] = a (2E)-enoyl-[ACP] + H2O. Functionally, involved in unsaturated fatty acids biosynthesis. Catalyzes the dehydration of short chain beta-hydroxyacyl-ACPs and long chain saturated and unsaturated beta-hydroxyacyl-ACPs. In Desulfotalea psychrophila (strain LSv54 / DSM 12343), this protein is 3-hydroxyacyl-[acyl-carrier-protein] dehydratase FabZ.